The following is a 512-amino-acid chain: Maturase K (512 aa).

Belongs to the intron maturase 2 family. MatK subfamily.

It is found in the plastid. The protein resides in the chloroplast. Its function is as follows. Usually encoded in the trnK tRNA gene intron. Probably assists in splicing its own and other chloroplast group II introns. The sequence is that of Maturase K from Lilium henryi (Henry's lily).